Reading from the N-terminus, the 448-residue chain is Tubulin beta-2 chain (448 aa).

Residues glutamine 11, glutamate 69, serine 138, glycine 142, threonine 143, glycine 144, asparagine 204, and asparagine 226 each coordinate GTP. Glutamate 69 is a binding site for Mg(2+). The interval 429-448 (TADEDGYEYEDEEEVGEEDA) is disordered.

It belongs to the tubulin family. Dimer of alpha and beta chains. A typical microtubule is a hollow water-filled tube with an outer diameter of 25 nm and an inner diameter of 15 nM. Alpha-beta heterodimers associate head-to-tail to form protofilaments running lengthwise along the microtubule wall with the beta-tubulin subunit facing the microtubule plus end conferring a structural polarity. Microtubules usually have 13 protofilaments but different protofilament numbers can be found in some organisms and specialized cells. It depends on Mg(2+) as a cofactor.

It is found in the cytoplasm. Its subcellular location is the cytoskeleton. In terms of biological role, tubulin is the major constituent of microtubules, a cylinder consisting of laterally associated linear protofilaments composed of alpha- and beta-tubulin heterodimers. Microtubules grow by the addition of GTP-tubulin dimers to the microtubule end, where a stabilizing cap forms. Below the cap, tubulin dimers are in GDP-bound state, owing to GTPase activity of alpha-tubulin. In Lupinus albus (White lupine), this protein is Tubulin beta-2 chain (TUBB2).